The chain runs to 162 residues: Cyanate hydratase (162 aa).

Residues R103, E106, and S129 contribute to the active site.

This sequence belongs to the cyanase family.

The enzyme catalyses cyanate + hydrogencarbonate + 3 H(+) = NH4(+) + 2 CO2. Functionally, catalyzes the reaction of cyanate with bicarbonate to produce ammonia and carbon dioxide. This is Cyanate hydratase from Pyrenophora tritici-repentis (strain Pt-1C-BFP) (Wheat tan spot fungus).